We begin with the raw amino-acid sequence, 69 residues long: MSSNCGSCDCADKTQCVKKGTSYTFDIVETQESYKEAMIMDVGAEENNANCKCKCGSSCSCVNCTCCPN.

Belongs to the metallothionein superfamily. Type 15 family. Expressed in leaf mesophyll cells, root tips, and at low levels in anthers.

Functionally, metallothioneins have a high content of cysteine residues that bind various heavy metals. Functions as a metal chelator of copper (Cu) and zinc (Zn). Plays a role in Cu homeostasis, specifically in the remobilization of Cu from senescing leaves. The mobilization of Cu from internal sources is important for seed development. The sequence is that of Metallothionein-like protein 3 from Arabidopsis thaliana (Mouse-ear cress).